We begin with the raw amino-acid sequence, 132 residues long: Small ribosomal subunit protein uS8 (132 aa).

Belongs to the universal ribosomal protein uS8 family. As to quaternary structure, part of the 30S ribosomal subunit. Contacts proteins S5 and S12.

Its function is as follows. One of the primary rRNA binding proteins, it binds directly to 16S rRNA central domain where it helps coordinate assembly of the platform of the 30S subunit. The sequence is that of Small ribosomal subunit protein uS8 from Listeria innocua serovar 6a (strain ATCC BAA-680 / CLIP 11262).